The primary structure comprises 559 residues: 3-aminoavenalumate diazotase (559 aa).

Serine 181 lines the Mg(2+) pocket. Alanine 227, glycine 332, and serine 336 together coordinate ATP. Residue glutamate 337 coordinates Mg(2+). Aspartate 416 and arginine 437 together coordinate ATP.

This sequence belongs to the ATP-dependent AMP-binding enzyme family. Requires Mg(2+) as cofactor.

It catalyses the reaction 3-aminoavenalumate + nitrite + ATP = 3-diazoavenalumate + AMP + diphosphate + H2O. The catalysed reaction is (E)-3-aminocoumarate + nitrite + ATP + H(+) = (E)-3-diazocoumarate + AMP + diphosphate + H2O. The enzyme catalyses 3-amino-4-hydroxybenzoate + nitrite + ATP + H(+) = 3-diazo-4-hydroxybenzoate + AMP + diphosphate + H2O. Ligase involved in the biosynthesis of avenalumic acid (AVA). Catalyzes the diazotization of 3-aminoavenalumic acid (3-AAA) to 3-diazoavenalumic acid (3-DAA). It can also act on 3-aminocoumaric acid (3-ACA) and 3-amino-4-hydroxybenzoic acid (3,4-AHBA) with lower activity. This chain is 3-aminoavenalumate diazotase, found in Streptomyces sp.